The chain runs to 376 residues: Protein-tyrosine sulfotransferase 2 (376 aa).

Topologically, residues 1–8 are cytoplasmic; that stretch reads MRLSVRKV. A helical; Signal-anchor for type II membrane protein transmembrane segment spans residues 9-25; it reads LLAVGCALALVLAVQLG. At 26–376 the chain is on the lumenal side; the sequence is QQVLECRAVL…NSTSPHLGSS (351 aa). Residue 77–81 participates in 3'-phosphoadenylyl sulfate binding; that stretch reads RSGTT. A disulfide bridge links Cys-95 with Cys-155. Glu-98 serves as the catalytic Proton donor/acceptor. The segment at 100 to 104 is interaction with peptide substrate; it reads RIIPR. The 3'-phosphoadenylyl sulfate site is built by Arg-182, Ser-190, and Arg-194. The cysteines at positions 224 and 232 are disulfide-linked. Residues Tyr-237, 284-293, and Lys-299 each bind 3'-phosphoadenylyl sulfate; that span reads STDQVIKPVN. Residues Asn-342 and Asn-367 are each glycosylated (N-linked (GlcNAc...) asparagine).

Belongs to the protein sulfotransferase family. In terms of assembly, homodimer. Can also form heterodimers with TPST1. N-glycosylated.

The protein resides in the golgi apparatus membrane. It carries out the reaction L-tyrosyl-[protein] + 3'-phosphoadenylyl sulfate = O-sulfo-L-tyrosine-[protein] + adenosine 3',5'-bisphosphate + H(+). Catalyzes the O-sulfation of tyrosine residues within acidic motifs of polypeptides, using 3'-phosphoadenylyl sulfate (PAPS) as cosubstrate. In Rattus norvegicus (Rat), this protein is Protein-tyrosine sulfotransferase 2 (Tpst2).